The following is a 675-amino-acid chain: Putative L-type lectin-domain containing receptor kinase I.11 (675 aa).

The first 22 residues, 1–22 (MASERLHLILLVFFNHLTFLLS), serve as a signal peptide directing secretion. Residues 23–292 (QQEEAGFIYN…PKAKQEQTSP (270 aa)) lie on the Extracellular side of the membrane. Positions 27–263 (AGFIYNGFGQ…YQYILGWSFS (237 aa)) are legume-lectin like. N-linked (GlcNAc...) asparagine glycosylation is found at asparagine 60, asparagine 129, asparagine 186, asparagine 209, and asparagine 230. Residues 293 to 313 (LLIVLLMLLVLIMLAVLGGIY) form a helical membrane-spanning segment. The Cytoplasmic portion of the chain corresponds to 314–675 (LYRRKKYAEV…THTITYGDGR (362 aa)). In terms of domain architecture, Protein kinase spans 348–620 (FDKDGRLGKG…QVIQYINQNL (273 aa)). Residues 354 to 362 (LGKGGFGEV) and lysine 376 contribute to the ATP site. The Proton acceptor role is filled by aspartate 472.

It in the C-terminal section; belongs to the protein kinase superfamily. Ser/Thr protein kinase family. The protein in the N-terminal section; belongs to the leguminous lectin family.

The protein resides in the cell membrane. The enzyme catalyses L-seryl-[protein] + ATP = O-phospho-L-seryl-[protein] + ADP + H(+). The catalysed reaction is L-threonyl-[protein] + ATP = O-phospho-L-threonyl-[protein] + ADP + H(+). The chain is Putative L-type lectin-domain containing receptor kinase I.11 (LECRK111) from Arabidopsis thaliana (Mouse-ear cress).